Here is a 414-residue protein sequence, read N- to C-terminus: Diaminopimelate decarboxylase (414 aa).

An N6-(pyridoxal phosphate)lysine modification is found at K52. Pyridoxal 5'-phosphate-binding positions include G231 and 265 to 268 (EPGR). Substrate-binding residues include R268, R304, and Y308. Residue C334 is the Proton donor of the active site. Residues E335 and Y362 each coordinate substrate. Y362 provides a ligand contact to pyridoxal 5'-phosphate.

It belongs to the Orn/Lys/Arg decarboxylase class-II family. LysA subfamily. In terms of assembly, homodimer. Pyridoxal 5'-phosphate serves as cofactor.

It catalyses the reaction meso-2,6-diaminopimelate + H(+) = L-lysine + CO2. The protein operates within amino-acid biosynthesis; L-lysine biosynthesis via DAP pathway; L-lysine from DL-2,6-diaminopimelate: step 1/1. Functionally, specifically catalyzes the decarboxylation of meso-diaminopimelate (meso-DAP) to L-lysine. The chain is Diaminopimelate decarboxylase from Neisseria meningitidis serogroup B (strain ATCC BAA-335 / MC58).